The chain runs to 788 residues: Endonuclease MutS2 (788 aa).

ATP is bound at residue 334-341 (GPNTGGKT). Residues 713 to 788 (LDLRGQRYEE…GTGATIVYLQ (76 aa)) enclose the Smr domain.

The protein belongs to the DNA mismatch repair MutS family. MutS2 subfamily. Homodimer. Binds to stalled ribosomes, contacting rRNA.

In terms of biological role, endonuclease that is involved in the suppression of homologous recombination and thus may have a key role in the control of bacterial genetic diversity. Its function is as follows. Acts as a ribosome collision sensor, splitting the ribosome into its 2 subunits. Detects stalled/collided 70S ribosomes which it binds and splits by an ATP-hydrolysis driven conformational change. Acts upstream of the ribosome quality control system (RQC), a ribosome-associated complex that mediates the extraction of incompletely synthesized nascent chains from stalled ribosomes and their subsequent degradation. Probably generates substrates for RQC. This chain is Endonuclease MutS2, found in Lactobacillus johnsonii (strain CNCM I-12250 / La1 / NCC 533).